The following is a 578-amino-acid chain: NADPH oxidase 4 (578 aa).

The Cytoplasmic portion of the chain corresponds to 1-16 (MAVSWRSWLANEGVKH). Residues 17 to 37 (LCLFIWLSMNVLLFWKTFLLY) form a helical membrane-spanning segment. Over 38 to 62 (NQGPEYHYLHQMLGLGLCLSRASAS) the chain is Extracellular. Residues 58–303 (RASASVLNLN…YCAERLYRYI (246 aa)) form the Ferric oxidoreductase domain. Residues 63-83 (VLNLNCSLILLPMCRTLLAYL) form a helical membrane-spanning segment. Over 84–103 (RGSQKVPSRRTRRLLDKSRT) the chain is Cytoplasmic. Residues 104–124 (FHITCGVTICIFSGVHVAAHL) traverse the membrane as a helical segment. Residues 125 to 154 (VNALNFSVNYSEDFVELNAARYRDEDPRKL) lie on the Extracellular side of the membrane. Residue N133 is glycosylated (N-linked (GlcNAc...) asparagine). A helical membrane pass occupies residues 155 to 175 (LFTTVPGLTGVCMVVVLFLMI). The Cytoplasmic portion of the chain corresponds to 176–188 (TASTYAIRVSNYD). The helical transmembrane segment at 189 to 209 (IFWYTHNLFFVFYMLLTLHVS) threads the bilayer. The Extracellular portion of the chain corresponds to 210 to 424 (GGLLKYQTNL…SPFEESLNYE (215 aa)). The interval 218-273 (NLDTHPPGCISLNRTSSQNISLPEYFSEHFHEPFPEGFSKPAEFTQHKFVKICMEE) is E-loop; essential for H2O2 generating catalytic activity. N-linked (GlcNAc...) asparagine glycosylation occurs at N230. Residues 248-575 (HEPFPEGFSK…YGTRFEYNKE (328 aa)) are mediates interaction with TLR4. The region spanning 304 to 419 (RSNKPVTIIS…DGPFGSPFEE (116 aa)) is the FAD-binding FR-type domain. A helical membrane pass occupies residues 425–445 (VSLCVAGGIGVTPFASILNTL). Over 446–578 (LDDWKPYKLR…RFEYNKESFS (133 aa)) the chain is Cytoplasmic.

Interacts with protein disulfide isomerase. Interacts with, relocalizes and stabilizes CYBA/p22phox. Interacts with TLR4. Interacts with PPP1R15A. Interacts with LRRC8A; this interaction prevents the ubiquitin-mediated degradation of LRRC8A. The cofactor is heme. Post-translationally, deubiquitinated by USP19. N-glycosylated and glycosylation is required for its proper function. In terms of processing, N-glycosylated. In terms of tissue distribution, expressed by distal tubular cells in kidney cortex and in endothelial cells (at protein level). Widely expressed. Strongly expressed in kidney and to a lower extent in heart, adipocytes, hepatoma, endothelial cells, skeletal muscle, brain, several brain tumor cell lines and airway epithelial cells.

It is found in the cytoplasm. Its subcellular location is the endoplasmic reticulum membrane. The protein localises to the cell membrane. It localises to the cell junction. The protein resides in the focal adhesion. It is found in the nucleus. Its subcellular location is the nucleolus. The protein localises to the perinuclear region. It catalyses the reaction NADPH + 2 O2 = 2 superoxide + NADP(+) + H(+). The catalysed reaction is NADPH + O2 + H(+) = H2O2 + NADP(+). Inhibited by plumbagin. Activated by phorbol 12-myristate 13-acetate (PMA). Activated by insulin. Inhibited by diphenylene iodonium. NADPH oxidase that catalyzes predominantly the reduction of oxygen to H2O2. Can also catalyze to a smaller extent, the reduction of oxygen to superoxide. May function as an oxygen sensor regulating the KCNK3/TASK-1 potassium channel and HIF1A activity. May regulate insulin signaling cascade. May play a role in apoptosis, bone resorption and lipolysaccharide-mediated activation of NFKB. May produce superoxide in the nucleus and play a role in regulating gene expression upon cell stimulation. Promotes ferroptosis, reactive oxygen species production and reduced glutathione (GSH) levels by activating NLRP3 inflammasome activation and cytokine release. Its function is as follows. NADPH oxidase that catalyzes the generation of superoxide from molecular oxygen utilizing NADPH as an electron donor. Involved in redox signaling in vascular cells. Modulates the nuclear activation of ERK1/2 and the ELK1 transcription factor, and is capable of inducing nuclear DNA damage. Functionally, lacks superoxide-generating NADPH oxidase activity. The chain is NADPH oxidase 4 (NOX4) from Homo sapiens (Human).